Here is a 152-residue protein sequence, read N- to C-terminus: Transcription elongation factor Spt5 (152 aa).

One can recognise a KOW domain in the interval Glu99 to Leu129.

The protein belongs to the archaeal Spt5 family. As to quaternary structure, heterodimer composed of Spt4 and Spt5. Interacts with RNA polymerase (RNAP).

Stimulates transcription elongation. In Sulfolobus acidocaldarius (strain ATCC 33909 / DSM 639 / JCM 8929 / NBRC 15157 / NCIMB 11770), this protein is Transcription elongation factor Spt5.